A 423-amino-acid chain; its full sequence is Probable electron transfer flavoprotein-quinone oxidoreductase YgcN (423 aa).

FAD is bound at residue 7–21; sequence IIIIGAGIAGTACAL.

Belongs to the ETF-QO/FixC family. Requires FAD as cofactor.

Probably accepts electrons from YgcQ/YgcR and reduces a quinone. In Escherichia coli (strain K12), this protein is Probable electron transfer flavoprotein-quinone oxidoreductase YgcN (ygcN).